The sequence spans 81 residues: ATP synthase subunit c, chloroplastic (81 aa).

The next 2 membrane-spanning stretches (helical) occupy residues 3–23 (PLIS…ASIG) and 57–77 (LAFM…LLFA).

This sequence belongs to the ATPase C chain family. As to quaternary structure, F-type ATPases have 2 components, F(1) - the catalytic core - and F(0) - the membrane proton channel. F(1) has five subunits: alpha(3), beta(3), gamma(1), delta(1), epsilon(1). F(0) has four main subunits: a(1), b(1), b'(1) and c(10-14). The alpha and beta chains form an alternating ring which encloses part of the gamma chain. F(1) is attached to F(0) by a central stalk formed by the gamma and epsilon chains, while a peripheral stalk is formed by the delta, b and b' chains.

It is found in the plastid. The protein resides in the chloroplast thylakoid membrane. Functionally, f(1)F(0) ATP synthase produces ATP from ADP in the presence of a proton or sodium gradient. F-type ATPases consist of two structural domains, F(1) containing the extramembraneous catalytic core and F(0) containing the membrane proton channel, linked together by a central stalk and a peripheral stalk. During catalysis, ATP synthesis in the catalytic domain of F(1) is coupled via a rotary mechanism of the central stalk subunits to proton translocation. Its function is as follows. Key component of the F(0) channel; it plays a direct role in translocation across the membrane. A homomeric c-ring of between 10-14 subunits forms the central stalk rotor element with the F(1) delta and epsilon subunits. In Acorus calamus var. americanus (American sweet flag), this protein is ATP synthase subunit c, chloroplastic.